A 492-amino-acid chain; its full sequence is GMP reductase (492 aa).

Residues 30 to 31 (SR) and arginine 78 contribute to the NADP(+) site. CBS domains follow at residues 99–162 (LIED…LVET) and 164–223 (MTPV…RNAT). NADP(+) is bound by residues 260 to 262 (DIA) and 313 to 314 (VG). The K(+) site is built by glycine 314, glycine 316, and cysteine 319. The active-site Thioimidate intermediate is cysteine 319. Catalysis depends on threonine 321, which acts as the Proton donor/acceptor. Arginine 322 lines the K(+) pocket. GMP contacts are provided by residues 352–354 (DGG), 375–376 (GN), and 401–403 (GMA). NADP(+)-binding positions include methionine 402 and 454–457 (SGIS). The short motif at 490–492 (SKL) is the Microbody targeting signal element.

The protein belongs to the IMPDH/GMPR family. GuaC type 1 subfamily. In terms of assembly, homotetramer.

The protein resides in the glycosome. The catalysed reaction is IMP + NH4(+) + NADP(+) = GMP + NADPH + 2 H(+). Its activity is regulated as follows. Activated by GTP and inhibited by XMP and the IMP analogs allopurinol nucleotide and thiopurinol nucleotide. Functionally, catalyzes the irreversible NADPH-dependent deamination of GMP to IMP. It functions in the conversion of nucleobase, nucleoside and nucleotide derivatives of G to A nucleotides, and in maintaining the intracellular balance of A and G nucleotides. In Leishmania donovani, this protein is GMP reductase.